We begin with the raw amino-acid sequence, 377 residues long: MNPVRQPYDLAAPAPNGMRRGRTTGSCATAAVKAALMLLLDGVDADEVFISLPDPDFYLAVPVESVAWLDENTVRAEVLKYAGDDPDNTDGATIFAEVKLNSSGALRFLAAPGVGMVTQPGLRIPPGEPAINPVPRQMMRMAVDEVLAGRPDPGIDLAIGCVDGDKIAKRTFNPMLGIVGGISILGTSGIVEPMSQAAWIASIEVYVRVALGELPPAIAFTPGKIGRGYAADTLGLEKKQVVQIANFVGDSLDFAESVLIEQGRILDTLWVLGHPGKIAKLLDGVWDTHSGKSGMAMDAVAGVAADLGYPSELVAQIKQANTVENVVQIMNSQPDTRGYWMEIERRTAARMATKVPSVRQVAVRLFSMDGTPLGEAA.

Positions 1 to 21 are disordered; it reads MNPVRQPYDLAAPAPNGMRRG.

Belongs to the CbiD family.

It carries out the reaction Co-precorrin-5B + S-adenosyl-L-methionine = Co-precorrin-6A + S-adenosyl-L-homocysteine. It functions in the pathway cofactor biosynthesis; adenosylcobalamin biosynthesis; cob(II)yrinate a,c-diamide from sirohydrochlorin (anaerobic route): step 6/10. Functionally, catalyzes the methylation of C-1 in cobalt-precorrin-5B to form cobalt-precorrin-6A. The sequence is that of Cobalt-precorrin-5B C(1)-methyltransferase from Chromobacterium violaceum (strain ATCC 12472 / DSM 30191 / JCM 1249 / CCUG 213 / NBRC 12614 / NCIMB 9131 / NCTC 9757 / MK).